Reading from the N-terminus, the 652-residue chain is Carboxypeptidase S1 homolog A (652 aa).

An N-terminal signal peptide occupies residues 1-19 (MRFAASIAVALPVIHAASA). Cysteines 50 and 121 form a disulfide. N-linked (GlcNAc...) asparagine glycosylation is found at N77, N132, N161, N168, N184, and N202. Residue S238 is part of the active site. Residues N260, N299, N347, and N410 are each glycosylated (N-linked (GlcNAc...) asparagine). Disulfide bonds link C325–C361 and C332–C354. D458 is a catalytic residue. Residue C461 participates in substrate binding. N474, N492, and N505 each carry an N-linked (GlcNAc...) asparagine glycan. H516 is an active-site residue. A substrate-binding site is contributed by E517. The disordered stretch occupies residues 608–627 (AASKGNPPPTTTSSPTAAPT). Residues 618 to 627 (TTSSPTAAPT) show a composition bias toward low complexity. G629 carries GPI-anchor amidated glycine lipidation. Residues 630–652 (SAMLKAPVAMLAISALTVLAFFL) constitute a propeptide, removed in mature form.

This sequence belongs to the peptidase S10 family.

Its subcellular location is the cell membrane. The enzyme catalyses Preferential release of a C-terminal arginine or lysine residue.. Its function is as follows. Extracellular serine carboxypeptidase that contributes to pathogenicity. The polypeptide is Carboxypeptidase S1 homolog A (SCPA) (Trichophyton rubrum (Athlete's foot fungus)).